The following is a 92-amino-acid chain: Large ribosomal subunit protein eL31 (92 aa).

Belongs to the eukaryotic ribosomal protein eL31 family.

This chain is Large ribosomal subunit protein eL31, found in Haloquadratum walsbyi (strain DSM 16790 / HBSQ001).